We begin with the raw amino-acid sequence, 220 residues long: Protein-L-isoaspartate O-methyltransferase (220 aa).

Ser-64 is an active-site residue.

It belongs to the methyltransferase superfamily. L-isoaspartyl/D-aspartyl protein methyltransferase family.

It is found in the cytoplasm. It catalyses the reaction [protein]-L-isoaspartate + S-adenosyl-L-methionine = [protein]-L-isoaspartate alpha-methyl ester + S-adenosyl-L-homocysteine. Its function is as follows. Catalyzes the methyl esterification of L-isoaspartyl residues in peptides and proteins that result from spontaneous decomposition of normal L-aspartyl and L-asparaginyl residues. It plays a role in the repair and/or degradation of damaged proteins. This is Protein-L-isoaspartate O-methyltransferase from Methanoculleus marisnigri (strain ATCC 35101 / DSM 1498 / JR1).